We begin with the raw amino-acid sequence, 217 residues long: MTNTEIFEKLTNAIVTQNIAGCVQLTQEALDAGIPPIDIITKGLSPGMKIIGDKFEAAEIFLPQIMMSAKAMSSAMEILTPELEKSKVEGEETGLAITFVAEGDIHDIGHRLVTTMLGANGFEILDLGVDVLNENVVEEAAKHKGQKVILVGSALMTTSMLGQKDLMDRLREEKLRDSLKCMFGGAPVSSKWIEEIGADATAENAAEAAKVALNIMK.

A B12-binding N-terminal domain is found at 1–91 (MTNTEIFEKL…ELEKSKVEGE (91 aa)). The 125-residue stretch at 93 to 217 (TGLAITFVAE…AAKVALNIMK (125 aa)) folds into the B12-binding domain. His-106 is a binding site for methylcob(III)alamin.

It belongs to the methylamine corrinoid protein family. In terms of assembly, can form a complex with MtmB.

Its pathway is one-carbon metabolism; methanogenesis from methylamine. Its function is as follows. Acts as a methyl group carrier between MtmB and MtbA. This is Monomethylamine corrinoid protein 2 (mtmC2) from Methanosarcina acetivorans (strain ATCC 35395 / DSM 2834 / JCM 12185 / C2A).